A 559-amino-acid polypeptide reads, in one-letter code: NAD(P)H-quinone oxidoreductase chain 4-2 (559 aa).

14 consecutive transmembrane segments (helical) span residues 5-25 (FPWLTTMIALPLVAALFIPLI), 35-55 (WYALGVGLADFVLMSYVFWTN), 86-106 (ISMPLVLLAGLVTTLSIFAAW), 114-134 (LFYFLMLVLYAAQIGVFVAQD), 136-156 (LLLFIMWELELVPVYLLVCIW), 168-188 (FLLYTAAASVFILVAALGLAF), 207-227 (IALELFLYAGLLIAFGVKLAI), 242-262 (SAPVSMILAGVLLKMGGYGLI), 274-294 (VYFAPILVILGVVNIIYGGFS), 310-330 (VSHMGFVLLGIASFTDLGISG), 331-351 (AMLQMLSHGLIAAVLFFLAGV), 374-394 (VFALFTMGAMASLALPGMSGF), 417-437 (VTVFLAAVGLVLTPIYLLSML), and 488-508 (VFIAACFLLPIIAVGLYPKLA).

The protein belongs to the complex I subunit 4 family.

Its subcellular location is the cellular thylakoid membrane. The catalysed reaction is a plastoquinone + NADH + (n+1) H(+)(in) = a plastoquinol + NAD(+) + n H(+)(out). It carries out the reaction a plastoquinone + NADPH + (n+1) H(+)(in) = a plastoquinol + NADP(+) + n H(+)(out). In terms of biological role, NDH-1 shuttles electrons from NAD(P)H, via FMN and iron-sulfur (Fe-S) centers, to quinones in the respiratory chain. The immediate electron acceptor for the enzyme in this species is believed to be plastoquinone. Couples the redox reaction to proton translocation (for every two electrons transferred, four hydrogen ions are translocated across the cytoplasmic membrane), and thus conserves the redox energy in a proton gradient. In Synechocystis sp. (strain ATCC 27184 / PCC 6803 / Kazusa), this protein is NAD(P)H-quinone oxidoreductase chain 4-2 (ndhD2).